Consider the following 425-residue polypeptide: CinA-like protein (425 aa).

Belongs to the CinA family.

The polypeptide is CinA-like protein (Desulfovibrio desulfuricans (strain ATCC 27774 / DSM 6949 / MB)).